Reading from the N-terminus, the 115-residue chain is DNA-binding protein PH1060 (115 aa).

This sequence belongs to the PDCD5 family.

The sequence is that of DNA-binding protein PH1060 from Pyrococcus horikoshii (strain ATCC 700860 / DSM 12428 / JCM 9974 / NBRC 100139 / OT-3).